A 436-amino-acid polypeptide reads, in one-letter code: Transcription factor MYB124 (436 aa).

Residues 1 to 11 are compositionally biased toward basic residues; sequence MEDTKKKKKKN. Residues 1–23 form a disordered region; that stretch reads MEDTKKKKKKNINNNQDSKKKER. Residues 8–15 carry the Nuclear localization signal 1 motif; sequence KKKNINNN. HTH myb-type domains are found at residues 20-71 and 72-126; these read KKER…YTYL and NSDF…KKRA. 2 consecutive DNA-binding regions (H-T-H motif) follow at residues 48–71 and 99–122; these read WAII…YTYL and WTEI…TTLC. A Nuclear localization signal 2 motif is present at residues 151–158; that stretch reads PRKSENET. The interval 309 to 328 is disordered; that stretch reads SWRQPDLHDSPASSEYSSGS. The span at 319–328 shows a compositional bias: polar residues; the sequence is PASSEYSSGS.

As to quaternary structure, interacts with RBR1. Expressed in all shoot organs with higher levels in leaves, stems, flowers, siliques and floral buds. Also detected in roots tips.

It localises to the nucleus. Functionally, transcription factor that binds to DNA in promoters cis-regulatory element 5'-GGCGCGC-3' of cell cycle genes, including cyclins, cyclin-dependent kinases (CDKs), and components of the pre-replication complex. Binds to DNA in promoters cis-regulatory element 5'-AGCCG-3' of auxin regulated genes (e.g. PIN3 and PIN7). Together with FAMA and MYB88, ensures that stomata contain just two guard cells (GCs) by enforcing a single symmetric precursor cell division before stomatal maturity. Represses the expression of the mitosis-inducing factors CDKB1-1 and CDKA-1, specifically required for the last guard mother cells (GMC) symmetric divisions in the stomatal pathway. Represses CYCA2-3 in newly formed guard cells. Together with MYB88, regulates stomata spacing by restricting divisions late in the stomatal cell lineage thus limiting the number of GMC divisions. In collaboration with CDKB1-1 and CDKB1-2, restrict the G1/S transition and chloroplast and nuclear number during stomatal formation, and normally maintain fate and developmental progression throughout the stomatal cell lineage. Also involved in the shape regulation of pavement cells. Involved in sensing and/or transducing abiotic stress (e.g. drought and salt), probably via the positive regulation of NAC019. Regulates female reproduction being required for entry into megasporogenesis, probably via the regulation of cell cycle genes. Promotes histone H3K27me3 marks and represses stem cell gene expression. Required for lateral roots (LRs) initiation via the regulation of PIN3 expression in an auxin-dependent manner. Involved in responses to gravity stimulation in primary roots by regulating the transcription of PIN3 and PIN7 in gravity-sensing cells, thus modulating auxin asymmetric redistribution. The sequence is that of Transcription factor MYB124 from Arabidopsis thaliana (Mouse-ear cress).